Here is a 387-residue protein sequence, read N- to C-terminus: UDP-N-acetylglucosamine--N-acetylmuramyl-(pentapeptide) pyrophosphoryl-undecaprenol N-acetylglucosamine transferase (387 aa).

Residues 23 to 25 (TGG), asparagine 135, arginine 174, serine 203, isoleucine 261, 280 to 285 (ALTVSE), and glutamine 306 contribute to the UDP-N-acetyl-alpha-D-glucosamine site.

Belongs to the glycosyltransferase 28 family. MurG subfamily.

The protein resides in the cell inner membrane. The enzyme catalyses di-trans,octa-cis-undecaprenyl diphospho-N-acetyl-alpha-D-muramoyl-L-alanyl-D-glutamyl-meso-2,6-diaminopimeloyl-D-alanyl-D-alanine + UDP-N-acetyl-alpha-D-glucosamine = di-trans,octa-cis-undecaprenyl diphospho-[N-acetyl-alpha-D-glucosaminyl-(1-&gt;4)]-N-acetyl-alpha-D-muramoyl-L-alanyl-D-glutamyl-meso-2,6-diaminopimeloyl-D-alanyl-D-alanine + UDP + H(+). Its pathway is cell wall biogenesis; peptidoglycan biosynthesis. Its function is as follows. Cell wall formation. Catalyzes the transfer of a GlcNAc subunit on undecaprenyl-pyrophosphoryl-MurNAc-pentapeptide (lipid intermediate I) to form undecaprenyl-pyrophosphoryl-MurNAc-(pentapeptide)GlcNAc (lipid intermediate II). In Colwellia psychrerythraea (strain 34H / ATCC BAA-681) (Vibrio psychroerythus), this protein is UDP-N-acetylglucosamine--N-acetylmuramyl-(pentapeptide) pyrophosphoryl-undecaprenol N-acetylglucosamine transferase.